We begin with the raw amino-acid sequence, 60 residues long: uncharacterized protein (60 aa).

A helical transmembrane segment spans residues 19 to 39 (LSIMCGCSIYFLLLVFILTFY).

It is found in the membrane. This is an uncharacterized protein from Saccharomyces cerevisiae (strain ATCC 204508 / S288c) (Baker's yeast).